Reading from the N-terminus, the 455-residue chain is Bifunctional protein GlmU (455 aa).

Residues 1 to 232 (MASTTGALIL…DPNLLGVNNP (232 aa)) form a pyrophosphorylase region. Residues 10-13 (LAAG), Lys24, Gln75, and 80-81 (GT) contribute to the UDP-N-acetyl-alpha-D-glucosamine site. Asp106 serves as a coordination point for Mg(2+). UDP-N-acetyl-alpha-D-glucosamine is bound by residues Gly141, Glu155, Asn172, and Asn230. Asn230 provides a ligand contact to Mg(2+). Residues 233–253 (AELIRSEALLRTRLVIGHIEG) are linker. Positions 254-455 (GVLIHAPETV…QTNLPRKPKA (202 aa)) are N-acetyltransferase. UDP-N-acetyl-alpha-D-glucosamine contacts are provided by Arg336 and Lys354. Catalysis depends on His366, which acts as the Proton acceptor. UDP-N-acetyl-alpha-D-glucosamine contacts are provided by Tyr369 and Asn380. Residues Ala383, 389-390 (NY), Ser408, Ala426, and Arg443 each bind acetyl-CoA.

The protein in the N-terminal section; belongs to the N-acetylglucosamine-1-phosphate uridyltransferase family. It in the C-terminal section; belongs to the transferase hexapeptide repeat family. In terms of assembly, homotrimer. It depends on Mg(2+) as a cofactor.

It is found in the cytoplasm. It carries out the reaction alpha-D-glucosamine 1-phosphate + acetyl-CoA = N-acetyl-alpha-D-glucosamine 1-phosphate + CoA + H(+). It catalyses the reaction N-acetyl-alpha-D-glucosamine 1-phosphate + UTP + H(+) = UDP-N-acetyl-alpha-D-glucosamine + diphosphate. The protein operates within nucleotide-sugar biosynthesis; UDP-N-acetyl-alpha-D-glucosamine biosynthesis; N-acetyl-alpha-D-glucosamine 1-phosphate from alpha-D-glucosamine 6-phosphate (route II): step 2/2. Its pathway is nucleotide-sugar biosynthesis; UDP-N-acetyl-alpha-D-glucosamine biosynthesis; UDP-N-acetyl-alpha-D-glucosamine from N-acetyl-alpha-D-glucosamine 1-phosphate: step 1/1. It participates in bacterial outer membrane biogenesis; LPS lipid A biosynthesis. In terms of biological role, catalyzes the last two sequential reactions in the de novo biosynthetic pathway for UDP-N-acetylglucosamine (UDP-GlcNAc). The C-terminal domain catalyzes the transfer of acetyl group from acetyl coenzyme A to glucosamine-1-phosphate (GlcN-1-P) to produce N-acetylglucosamine-1-phosphate (GlcNAc-1-P), which is converted into UDP-GlcNAc by the transfer of uridine 5-monophosphate (from uridine 5-triphosphate), a reaction catalyzed by the N-terminal domain. This Nitratidesulfovibrio vulgaris (strain ATCC 29579 / DSM 644 / CCUG 34227 / NCIMB 8303 / VKM B-1760 / Hildenborough) (Desulfovibrio vulgaris) protein is Bifunctional protein GlmU.